Consider the following 674-residue polypeptide: Sodium/myo-inositol cotransporter 2 (674 aa).

At 1–27 the chain is on the extracellular side; that stretch reads MESSTSSPQPPLSDPLDPFPQRSLEPG. A helical transmembrane segment spans residues 28–48; sequence DIAVLVLYFLFVLAVGLWSTV. At 49–56 the chain is on the cytoplasmic side; it reads KTKRDTVK. A helical transmembrane segment spans residues 57–77; that stretch reads GYFLAGGDMVWWPVGASLFAS. Over 78–102 the chain is Extracellular; the sequence is NVGSGHFVGLAGSGAATGISVAAYE. Residues 103 to 123 form a helical membrane-spanning segment; that stretch reads FNGMFSVLMLAWIFLPIYIAG. Residues 124–140 lie on the Cytoplasmic side of the membrane; that stretch reads QVTTMPEYLRRRFGGSR. A helical transmembrane segment spans residues 141 to 161; the sequence is IAITLAVLYLFIYIFTKISVD. Topologically, residues 162 to 180 are extracellular; that stretch reads MYAGAIFIQQSLHLDLYLS. Residues 181–201 traverse the membrane as a helical segment; sequence VVGLLAVTALYTVAGGLAAVI. Topologically, residues 202–208 are cytoplasmic; that stretch reads YTDALQT. A helical transmembrane segment spans residues 209-229; sequence LIMLVGALTLMGYSFAAVGGM. Residues 230–272 lie on the Extracellular side of the membrane; it reads EGLQEKYFLALPSNRSENSSCGLPREDAFHLFRDPLTSDLPWP. The chain crosses the membrane as a helical span at residues 273–293; it reads GILFGMSIPSLWYWCTDQVIV. Over 294–308 the chain is Cytoplasmic; sequence QRSLAAKNLSHAKGG. A helical membrane pass occupies residues 309–329; it reads SLMAAYLKVLPLFIMVFPGMV. Over 330-375 the chain is Extracellular; the sequence is SRILFPDQVACADPETCQRVCNNPSGCSDIAYPKLVLELLPTGLRG. Residues 376 to 396 traverse the membrane as a helical segment; sequence LMMAVMVAALMSSLTSIFNSA. Residues 397 to 418 are Cytoplasmic-facing; it reads STIFTMDLWNHVRPRASEKELM. Residues 419–439 form a helical membrane-spanning segment; sequence IVGRVFVLLLVLVSVLWIPVV. The Extracellular segment spans residues 440–446; sequence QASQGGQ. Residues 447 to 467 form a helical membrane-spanning segment; it reads LFVYIQAISSYLQPPVAMVFV. The Cytoplasmic segment spans residues 468–479; the sequence is LGCFWKRANEKG. Residues 480–500 form a helical membrane-spanning segment; the sequence is AFWGLVLGLLLGFIRLILDFI. Topologically, residues 501-521 are extracellular; sequence YVEPACHQPDERPSVVKNVHY. Residues 522–542 form a helical membrane-spanning segment; that stretch reads LYFSMILSSVTVLTVTVMSLL. Residues 543–653 are Cytoplasmic-facing; that stretch reads TEPPSKEMIS…SIEENPVVKT (111 aa). Residues 654–674 form a helical membrane-spanning segment; that stretch reads LLDVNCLLCICCAFFLWGYFA.

The protein belongs to the sodium:solute symporter (SSF) (TC 2.A.21) family. As to expression, expressed in brain, lung and kidney. In the kidney, strongly expressed in the cortex, at the luminal side of proximal convoluted tubules and in BBMVs. Weaker expression observed in the medulla (at protein level).

It localises to the membrane. Its subcellular location is the apical cell membrane. The enzyme catalyses myo-inositol(out) + 2 Na(+)(out) = myo-inositol(in) + 2 Na(+)(in). It carries out the reaction 1D-chiro-inositol(out) + 2 Na(+)(out) = 1D-chiro-inositol(in) + 2 Na(+)(in). It catalyses the reaction D-glucose(out) + 2 Na(+)(out) = D-glucose(in) + 2 Na(+)(in). The catalysed reaction is D-xylose(out) + 2 Na(+)(out) = D-xylose(in) + 2 Na(+)(in). With respect to regulation, MI transport activity stimulated five-fold under 24 hour hypertonic shock conditions. MI inward currents were gradually inhibited as increasing amounts of phlorizin were added to the superfusion medium. When sodium is replaced by potassium, MI uptake is dramatically reduced and in the presence of L-fucose or D-chiro-inositol (DCI), the specific accumulation of tracer amounts of MI is also reduced. Functionally, involved in the sodium-dependent cotransport of myo-inositol (MI) with a Na(+):MI stoichiometry of 2:1. Exclusively responsible for apical MI transport and absorption in intestine. Can also transport D-chiro-inositol (DCI) but not L-fucose. Exhibits stereospecific cotransport of both D-glucose and D-xylose. May induce apoptosis through the TNF-alpha, PDCD1 pathway. May play a role in the regulation of MI concentration in serum, involving reabsorption in at least the proximal tubule of the kidney. The sequence is that of Sodium/myo-inositol cotransporter 2 from Oryctolagus cuniculus (Rabbit).